The following is a 347-amino-acid chain: N-acetyl-gamma-glutamyl-phosphate reductase (347 aa).

Cys-152 is a catalytic residue.

Belongs to the NAGSA dehydrogenase family. Type 1 subfamily.

It localises to the cytoplasm. It catalyses the reaction N-acetyl-L-glutamate 5-semialdehyde + phosphate + NADP(+) = N-acetyl-L-glutamyl 5-phosphate + NADPH + H(+). It functions in the pathway amino-acid biosynthesis; L-arginine biosynthesis; N(2)-acetyl-L-ornithine from L-glutamate: step 3/4. Its function is as follows. Catalyzes the NADPH-dependent reduction of N-acetyl-5-glutamyl phosphate to yield N-acetyl-L-glutamate 5-semialdehyde. The polypeptide is N-acetyl-gamma-glutamyl-phosphate reductase (Ehrlichia ruminantium (strain Gardel)).